Reading from the N-terminus, the 181-residue chain is Probable calcium-binding protein CML16 (181 aa).

Positions 1–24 are disordered; it reads MSNTTEKKMPQQQQVERPTALAPA. 4 consecutive EF-hand domains span residues 23 to 58, 63 to 98, 100 to 135, and 136 to 171; these read PADA…IAPP, AGGR…GRGD, EHEA…IGEG, and CSAE…DAAA. Residues aspartate 36, aspartate 38, aspartate 40, arginine 42, glutamate 47, aspartate 76, aspartate 78, aspartate 80, glutamate 87, aspartate 113, aspartate 115, aspartate 117, arginine 119, glutamate 124, aspartate 149, aspartate 151, aspartate 153, cysteine 155, and glutamate 160 each contribute to the Ca(2+) site.

In terms of biological role, potential calcium sensor. In Oryza sativa subsp. japonica (Rice), this protein is Probable calcium-binding protein CML16 (CML16).